A 323-amino-acid polypeptide reads, in one-letter code: Fructose-1,6-bisphosphatase class 1 (323 aa).

The Mg(2+) site is built by E84, D103, L105, and D106. Substrate contacts are provided by residues 106–109, N198, and K264; that span reads DGSS. E270 is a binding site for Mg(2+).

The protein belongs to the FBPase class 1 family. As to quaternary structure, homotetramer. Mg(2+) serves as cofactor.

It localises to the cytoplasm. It carries out the reaction beta-D-fructose 1,6-bisphosphate + H2O = beta-D-fructose 6-phosphate + phosphate. It functions in the pathway carbohydrate biosynthesis; gluconeogenesis. In Hydrogenovibrio crunogenus (strain DSM 25203 / XCL-2) (Thiomicrospira crunogena), this protein is Fructose-1,6-bisphosphatase class 1.